Consider the following 448-residue polypeptide: GTPase Der (448 aa).

2 EngA-type G domains span residues 3–167 (PVIA…EPPE) and 182–355 (TRLA…ASAT). Residues 9 to 16 (GRPNVGKS), 56 to 60 (DTGGF), 119 to 122 (NKAE), 188 to 195 (GRPNVGKS), 235 to 239 (DTAGL), and 300 to 303 (NKWD) each bind GTP. A KH-like domain is found at 356 to 440 (RKLPTPQLTR…PMRIELRASH (85 aa)).

It belongs to the TRAFAC class TrmE-Era-EngA-EngB-Septin-like GTPase superfamily. EngA (Der) GTPase family. Associates with the 50S ribosomal subunit.

Functionally, GTPase that plays an essential role in the late steps of ribosome biogenesis. In Leptothrix cholodnii (strain ATCC 51168 / LMG 8142 / SP-6) (Leptothrix discophora (strain SP-6)), this protein is GTPase Der.